Here is a 737-residue protein sequence, read N- to C-terminus: Catalase-peroxidase (737 aa).

A signal peptide spans 1–23 (MLKKILPVLITLAIVHNTPTAWA). Residues 102 to 223 (WHGAGTYRIY…LAATQMGLIY (122 aa)) constitute a cross-link (tryptophyl-tyrosyl-methioninium (Trp-Tyr) (with M-249)). Residue histidine 103 is the Proton acceptor of the active site. Residues 223–249 (YVNPEGPNGKPDPVAAAKDIREAFARM) constitute a cross-link (tryptophyl-tyrosyl-methioninium (Tyr-Met) (with W-102)). Residue histidine 264 coordinates heme b.

Belongs to the peroxidase family. Peroxidase/catalase subfamily. Homodimer or homotetramer. It depends on heme b as a cofactor. In terms of processing, formation of the three residue Trp-Tyr-Met cross-link is important for the catalase, but not the peroxidase activity of the enzyme.

It carries out the reaction H2O2 + AH2 = A + 2 H2O. The catalysed reaction is 2 H2O2 = O2 + 2 H2O. Bifunctional enzyme with both catalase and broad-spectrum peroxidase activity. The protein is Catalase-peroxidase of Yersinia pseudotuberculosis serotype O:3 (strain YPIII).